We begin with the raw amino-acid sequence, 469 residues long: UDP-N-acetylmuramate--L-alanine ligase (469 aa).

113–119 is an ATP binding site; sequence GTHGKTT.

Belongs to the MurCDEF family.

It localises to the cytoplasm. The catalysed reaction is UDP-N-acetyl-alpha-D-muramate + L-alanine + ATP = UDP-N-acetyl-alpha-D-muramoyl-L-alanine + ADP + phosphate + H(+). Its pathway is cell wall biogenesis; peptidoglycan biosynthesis. In terms of biological role, cell wall formation. This chain is UDP-N-acetylmuramate--L-alanine ligase, found in Neisseria meningitidis serogroup B (strain ATCC BAA-335 / MC58).